The following is a 61-amino-acid chain: Small ribosomal subunit protein uS14 (61 aa).

Zn(2+) is bound by residues Cys24, Cys27, Cys40, and Cys43.

The protein belongs to the universal ribosomal protein uS14 family. Zinc-binding uS14 subfamily. In terms of assembly, part of the 30S ribosomal subunit. Contacts proteins S3 and S10. Zn(2+) serves as cofactor.

Its function is as follows. Binds 16S rRNA, required for the assembly of 30S particles and may also be responsible for determining the conformation of the 16S rRNA at the A site. The polypeptide is Small ribosomal subunit protein uS14 (Nitratidesulfovibrio vulgaris (strain DSM 19637 / Miyazaki F) (Desulfovibrio vulgaris)).